Consider the following 198-residue polypeptide: NAD(P)H dehydrogenase (quinone) (198 aa).

The 186-residue stretch at 4–189 folds into the Flavodoxin-like domain; sequence ILVLYYSMYG…SIARYQGEYV (186 aa). FMN contacts are provided by residues 10–15 and 78–80; these read SMYGHI and TRF. An NAD(+)-binding site is contributed by tyrosine 12. Residue tryptophan 98 participates in substrate binding. FMN is bound by residues 113 to 118 and histidine 133; that span reads STGTGG.

Belongs to the WrbA family. FMN serves as cofactor.

It carries out the reaction a quinone + NADH + H(+) = a quinol + NAD(+). It catalyses the reaction a quinone + NADPH + H(+) = a quinol + NADP(+). This is NAD(P)H dehydrogenase (quinone) from Salmonella paratyphi C (strain RKS4594).